Here is a 126-residue protein sequence, read N- to C-terminus: Late expression factor 11 (126 aa).

Belongs to the baculoviridae LEF-11 family.

In terms of biological role, involved in late/very late gene activation. The sequence is that of Late expression factor 11 (LEF-11) from Epiphyas postvittana nucleopolyhedrovirus (EppoMNPV).